Reading from the N-terminus, the 376-residue chain is Flagellin B (376 aa).

The stretch at 103–130 (SNSSSERQAIQEEVSALNDELNRIAETT) forms a coiled coil.

It belongs to the bacterial flagellin family. In terms of assembly, heteromer of multiple flagellin subunits including FlaA, FlaB, FlaC, FlaD and possibly FlaE.

It is found in the secreted. It localises to the bacterial flagellum. Flagellin is the subunit protein which polymerizes to form the filaments of bacterial flagella. FlaB is not essential for flagellar synthesis and motility. This chain is Flagellin B (flaB), found in Vibrio anguillarum (Listonella anguillarum).